The sequence spans 351 residues: Nicotinate-nucleotide--dimethylbenzimidazole phosphoribosyltransferase (351 aa).

The active-site Proton acceptor is E317.

This sequence belongs to the CobT family.

The enzyme catalyses 5,6-dimethylbenzimidazole + nicotinate beta-D-ribonucleotide = alpha-ribazole 5'-phosphate + nicotinate + H(+). The protein operates within nucleoside biosynthesis; alpha-ribazole biosynthesis; alpha-ribazole from 5,6-dimethylbenzimidazole: step 1/2. Functionally, catalyzes the synthesis of alpha-ribazole-5'-phosphate from nicotinate mononucleotide (NAMN) and 5,6-dimethylbenzimidazole (DMB). This is Nicotinate-nucleotide--dimethylbenzimidazole phosphoribosyltransferase from Pseudomonas putida (strain ATCC 700007 / DSM 6899 / JCM 31910 / BCRC 17059 / LMG 24140 / F1).